The sequence spans 227 residues: Thymidine kinase 1 (227 aa).

ATP contacts are provided by residues 15–22 (GPMFSGKT), 47–49 (DTR), and 91–94 (DEGQ). Glu-92 acts as the Proton acceptor in catalysis. A substrate-binding site is contributed by Phe-122. Zn(2+) is bound by residues Cys-147 and Cys-150. Residues 166–170 (IELIG) and Tyr-175 each bind substrate. Positions 179 and 182 each coordinate Zn(2+). Positions 187–196 (QNEGNSTKPS) are enriched in polar residues. Residues 187-227 (QNEGNSTKPSKTARHSHSQSAPSVAPLAVNINPDDHLNNDY) are disordered.

Belongs to the thymidine kinase family. As to quaternary structure, interacts with calmodulin in the presence of Ca(2+).

The enzyme catalyses thymidine + ATP = dTMP + ADP + H(+). The polypeptide is Thymidine kinase 1 (Dictyostelium discoideum (Social amoeba)).